The chain runs to 558 residues: Suppressor of zyg-1 protein 20 (558 aa).

The 102-residue stretch at 45–146 folds into the SUZ domain; it reads KVKAEESSGV…ARNRILGTEY (102 aa). Disordered regions lie at residues 50-132, 205-241, and 374-558; these read ESSG…ERQA, FTQP…QQSL, and QRNQ…NRPQ. Residues 69 to 81 are compositionally biased toward basic and acidic residues; it reads EEPKRVFLRRPKD. A compositionally biased stretch (polar residues) spans 94 to 109; that stretch reads PPTSADTEEQPVTNVR. Residues 117 to 131 are compositionally biased toward basic and acidic residues; that stretch reads NQKEKQPAPTYEERQ. Composition is skewed to low complexity over residues 374-394 and 424-477; these read QRNQ…QNRQ and NNGQ…QQQQ. Polar residues-rich tracts occupy residues 478 to 508 and 545 to 558; these read NKSG…SQNP and SASQ…NRPQ.

Interacts (via C-terminus) with atx-2 (via C-terminus); the interaction is RNA independent. Interacts with let-92. In terms of processing, phosphorylated. May be dephosphorylated by let-92.

The protein resides in the cytoplasm. Its subcellular location is the cytoskeleton. It is found in the microtubule organizing center. The protein localises to the centrosome. It localises to the centriole. The protein resides in the nucleus. Its subcellular location is the nucleolus. It is found in the chromosome. Functionally, RNA binding protein that is required for normal cell division and cytokinesis during embryonic development. Functions with RNA-binding protein atx-2 to ensure embryonic cell division, and to this end, plays a role in the regulation of centrosome assembly, position and size, and in astral microtubule outgrowth and nucleation. Furthermore, negatively regulates the levels of the protein kinase zyg-1 at the centrosome. Also involved in ensuring centrosome attachment to the nuclear envelope. The polypeptide is Suppressor of zyg-1 protein 20 (Caenorhabditis elegans).